A 546-amino-acid chain; its full sequence is Beta-amylase (546 aa).

A signal peptide spans 1-30; it reads MKNQFQYCCIVILSVVMLFVSLLIPQASSA. D79 contacts substrate. Residues E86, D90, and Q91 each coordinate Ca(2+). Residues H119 and D127 each contribute to the substrate site. C121 and C129 are disulfide-bonded. Positions 171 and 174 each coordinate Ca(2+). E202 serves as the catalytic Proton donor. 3 residues coordinate substrate: K317, H322, and T360. E397 serves as the catalytic Proton acceptor. Substrate is bound by residues 398–399 and R427; that span reads NA. Residues 444–546 form the CBM20 domain; it reads LLGVTPVMQT…LKTTSHTSSW (103 aa).

This sequence belongs to the glycosyl hydrolase 14 family. In terms of assembly, monomer. Ca(2+) serves as cofactor.

The catalysed reaction is Hydrolysis of (1-&gt;4)-alpha-D-glucosidic linkages in polysaccharides so as to remove successive maltose units from the non-reducing ends of the chains.. In Bacillus cereus, this protein is Beta-amylase (spoII).